Here is a 249-residue protein sequence, read N- to C-terminus: Diaminopimelate epimerase (249 aa).

The substrate site is built by Asn-11 and Asn-60. Cys-69 (proton donor) is an active-site residue. Residues 70–71 (GN), Asn-164, and 182–183 (ER) each bind substrate. The active-site Proton acceptor is Cys-192. Substrate is bound at residue 193–194 (GT).

Belongs to the diaminopimelate epimerase family. In terms of assembly, homodimer.

Its subcellular location is the cytoplasm. The catalysed reaction is (2S,6S)-2,6-diaminopimelate = meso-2,6-diaminopimelate. It participates in amino-acid biosynthesis; L-lysine biosynthesis via DAP pathway; DL-2,6-diaminopimelate from LL-2,6-diaminopimelate: step 1/1. In terms of biological role, catalyzes the stereoinversion of LL-2,6-diaminopimelate (L,L-DAP) to meso-diaminopimelate (meso-DAP), a precursor of L-lysine and an essential component of the bacterial peptidoglycan. This is Diaminopimelate epimerase from Campylobacter jejuni subsp. doylei (strain ATCC BAA-1458 / RM4099 / 269.97).